We begin with the raw amino-acid sequence, 125 residues long: Small ribosomal subunit protein eS8 (125 aa).

The span at 1–11 shows a compositional bias: polar residues; the sequence is MAISQGKSTRL. The segment at 1-38 is disordered; sequence MAISQGKSTRLPSGARNVANRGKRKAELGRDPAETRVD. Over residues 25–38 the composition is skewed to basic and acidic residues; the sequence is KAELGRDPAETRVD.

The protein belongs to the eukaryotic ribosomal protein eS8 family. Part of the 30S ribosomal subunit.

In Methanobrevibacter smithii (strain ATCC 35061 / DSM 861 / OCM 144 / PS), this protein is Small ribosomal subunit protein eS8.